The following is a 321-amino-acid chain: uncharacterized protein (321 aa).

Over 1-5 the chain is Cytoplasmic; sequence MKQQA. Residues 6-26 form a helical membrane-spanning segment; that stretch reads GIGILLALTTAICWGALPIAM. Positions 17–144 constitute an EamA 1 domain; sequence ICWGALPIAM…LLSGLVMFFN (128 aa). Residues 27–35 lie on the Periplasmic side of the membrane; the sequence is KQVLEVMEP. A helical transmembrane segment spans residues 36-56; the sequence is PTIVFYRFLMASIGLGAILAV. At 57-70 the chain is on the cytoplasmic side; sequence KKRLPPLRVFRKPR. The chain crosses the membrane as a helical span at residues 71–91; that stretch reads WLILLAVATAGLFGNFILFSS. Over 92–99 the chain is Periplasmic; sequence SLQYLSPT. Residues 100–120 traverse the membrane as a helical segment; the sequence is ASQVIGQLSPVGMMVASVFIL. Residues 121-130 lie on the Cytoplasmic side of the membrane; that stretch reads KEKMRSTQVV. Residues 131–151 traverse the membrane as a helical segment; the sequence is GALMLLSGLVMFFNTSLVEIF. Residues 152–156 lie on the Periplasmic side of the membrane; that stretch reads TKLTD. The chain crosses the membrane as a helical span at residues 157–177; it reads YTWGVIFGVGAATVWVSYGVA. An EamA 2 domain is found at 169-292; sequence TVWVSYGVAQ…GYLGAFVVVA (124 aa). The Cytoplasmic segment spans residues 178–190; it reads QKVLLRRLASPQI. Residues 191–211 form a helical membrane-spanning segment; sequence LFLLYTLCTIALFPLAKPGVI. Residues 212-216 are Periplasmic-facing; that stretch reads AQLSH. A helical membrane pass occupies residues 217–237; the sequence is WQLACLIFCGLNTLVGYGALA. Residues 238–249 are Cytoplasmic-facing; it reads EAMARWQAAQVS. A helical membrane pass occupies residues 250–270; that stretch reads AIITLTPLFTLFFSDLLSLAW. The Periplasmic segment spans residues 271 to 278; that stretch reads PDFFARPM. Residues 279 to 299 traverse the membrane as a helical segment; sequence LNLLGYLGAFVVVAGAMYSAI. The Cytoplasmic portion of the chain corresponds to 300–321; that stretch reads GHRIWGGLRKHTTVVSQPRAGE.

Belongs to the EamA transporter family.

The protein localises to the cell inner membrane. This is an uncharacterized protein from Escherichia coli O157:H7.